Here is a 127-residue protein sequence, read N- to C-terminus: Calcitonin receptor-stimulating peptide 2 (127 aa).

A signal peptide spans 1–25 (MGFWKLSPFLAIGLLVMYQAGILQA). Positions 26 to 81 (APFRSALENPLESATLTEDEICVLLTAVVKDYVQMKARELQQEQETEGSSLTAQKS) are excised as a propeptide. A disordered region spans residues 65 to 85 (LQQEQETEGSSLTAQKSSCKD). A compositionally biased stretch (polar residues) spans 72–81 (EGSSLTAQKS). A disulfide bridge connects residues cysteine 83 and cysteine 88.

This sequence belongs to the calcitonin family.

The protein resides in the secreted. The sequence is that of Calcitonin receptor-stimulating peptide 2 (CRSP2) from Canis lupus familiaris (Dog).